The primary structure comprises 352 residues: Glycerol-1-phosphate dehydrogenase [NAD(P)+] (352 aa).

Residues 98-102 and 120-123 contribute to the NAD(+) site; these read GKAID and TAAS. Asp-125 contributes to the substrate binding site. Residue Ser-129 coordinates NAD(+). Residue Asp-172 participates in substrate binding. 2 residues coordinate Zn(2+): Asp-172 and His-252. His-256 lines the substrate pocket. His-268 is a Zn(2+) binding site.

Belongs to the glycerol-1-phosphate dehydrogenase family. It depends on Zn(2+) as a cofactor.

It is found in the cytoplasm. It catalyses the reaction sn-glycerol 1-phosphate + NAD(+) = dihydroxyacetone phosphate + NADH + H(+). The enzyme catalyses sn-glycerol 1-phosphate + NADP(+) = dihydroxyacetone phosphate + NADPH + H(+). Its pathway is membrane lipid metabolism; glycerophospholipid metabolism. Its function is as follows. Catalyzes the NAD(P)H-dependent reduction of dihydroxyacetonephosphate (DHAP or glycerone phosphate) to glycerol 1-phosphate (G1P). The G1P thus generated is used as the glycerophosphate backbone of phospholipids in the cellular membranes of Archaea. In Halobacterium salinarum (strain ATCC 29341 / DSM 671 / R1), this protein is Glycerol-1-phosphate dehydrogenase [NAD(P)+].